A 112-amino-acid polypeptide reads, in one-letter code: cAMP-regulated phosphoprotein 19 (112 aa).

Met1 carries the N-acetylmethionine modification. Residues 1–11 (MSAEVPEAASA) are compositionally biased toward low complexity. A disordered region spans residues 1–49 (MSAEVPEAASAEEQKEMEDKVTSPEKAEEAKLKARYPHLGQKPGGSDFL). N-acetylserine is present on Ser2. A phosphoserine mark is found at Ser2 and Ser23. Residues 12–32 (EEQKEMEDKVTSPEKAEEAKL) show a composition bias toward basic and acidic residues. A phosphoserine; by GWL mark is found at Ser62 and Ser104. The tract at residues 74–112 (NKQLPAAAPDKTEVTGDHIPTPQDLPQRKPSLVASKLAG) is disordered. Phosphoserine; by PKA is present on Ser104. Lys109 is subject to N6-acetyllysine.

This sequence belongs to the endosulfine family. In terms of assembly, interacts (when phosphorylated at Ser-62) with PPP2R2D. Interacts with SNCA. Interacts with PPP2R2A; the interaction is direct and this interaction inhibits PP2A activity. Phosphorylation at Ser-62 by MASTL/GWL during mitosis is essential for interaction with PPP2R2D (PR55-delta) and subsequent inactivation of PP2A. Phosphorylated by PKA.

The protein resides in the cytoplasm. Its function is as follows. Protein phosphatase inhibitor that specifically inhibits protein phosphatase 2A (PP2A) during mitosis. Inhibition of PP2A is enhanced when ARPP19 is phosphorylated. When phosphorylated at Ser-62 during mitosis, specifically interacts with PPP2R2D (PR55-delta) and inhibits its activity, leading to inactivation of PP2A, an essential condition to keep cyclin-B1-CDK1 activity high during M phase. May indirectly enhance GAP-43 expression by binding to the NGF-regulatory region of its mRNA. The chain is cAMP-regulated phosphoprotein 19 (Arpp19) from Mus musculus (Mouse).